A 688-amino-acid polypeptide reads, in one-letter code: Potassium-transporting ATPase ATP-binding subunit (688 aa).

The next 4 membrane-spanning stretches (helical) occupy residues 35–55 (VMMVVWCCCVLLTIVCGVQFA), 62–82 (AVFSLGVTAWLWFTLLFANLA), 219–239 (IALSILLVALTLVFLLAVVTL), and 260–280 (VLVALLVCLIPTTIGGLLSAI). The 4-aspartylphosphate intermediate role is filled by Asp313. Residues Asp350, Glu354, 383-390 (FSAQTRMS), and Lys401 contribute to the ATP site. The Mg(2+) site is built by Asp524 and Asp528. The next 3 membrane-spanning stretches (helical) occupy residues 594-614 (FAILPAAFITTYPQLGALNLM), 622-642 (AILSAVIFNALIIIGLIPLAL), and 668-688 (VVLPFIGIKVIDLFLTLMGWI).

This sequence belongs to the cation transport ATPase (P-type) (TC 3.A.3) family. Type IA subfamily. As to quaternary structure, the system is composed of three essential subunits: KdpA, KdpB and KdpC.

The protein localises to the cell inner membrane. It carries out the reaction K(+)(out) + ATP + H2O = K(+)(in) + ADP + phosphate + H(+). In terms of biological role, part of the high-affinity ATP-driven potassium transport (or Kdp) system, which catalyzes the hydrolysis of ATP coupled with the electrogenic transport of potassium into the cytoplasm. This subunit is responsible for energy coupling to the transport system and for the release of the potassium ions to the cytoplasm. This chain is Potassium-transporting ATPase ATP-binding subunit, found in Tolumonas auensis (strain DSM 9187 / NBRC 110442 / TA 4).